We begin with the raw amino-acid sequence, 540 residues long: GMP synthase [glutamine-hydrolyzing] (540 aa).

Residues isoleucine 26 to threonine 216 enclose the Glutamine amidotransferase type-1 domain. Residue cysteine 103 is the Nucleophile of the active site. Catalysis depends on residues histidine 190 and glutamate 192. A GMPS ATP-PPase domain is found at tryptophan 217–arginine 415. Serine 244–serine 250 contacts ATP.

In terms of assembly, homodimer.

The catalysed reaction is XMP + L-glutamine + ATP + H2O = GMP + L-glutamate + AMP + diphosphate + 2 H(+). The protein operates within purine metabolism; GMP biosynthesis; GMP from XMP (L-Gln route): step 1/1. In terms of biological role, catalyzes the synthesis of GMP from XMP. In Trichormus variabilis (strain ATCC 29413 / PCC 7937) (Anabaena variabilis), this protein is GMP synthase [glutamine-hydrolyzing].